The following is a 195-amino-acid chain: Imidazoleglycerol-phosphate dehydratase (195 aa).

It belongs to the imidazoleglycerol-phosphate dehydratase family.

The protein localises to the cytoplasm. The enzyme catalyses D-erythro-1-(imidazol-4-yl)glycerol 3-phosphate = 3-(imidazol-4-yl)-2-oxopropyl phosphate + H2O. The protein operates within amino-acid biosynthesis; L-histidine biosynthesis; L-histidine from 5-phospho-alpha-D-ribose 1-diphosphate: step 6/9. The polypeptide is Imidazoleglycerol-phosphate dehydratase (Paraburkholderia phytofirmans (strain DSM 17436 / LMG 22146 / PsJN) (Burkholderia phytofirmans)).